A 467-amino-acid polypeptide reads, in one-letter code: Glutamate--tRNA ligase (467 aa).

Positions 14–24 match the 'HIGH' region motif; that stretch reads PSPTGFLHLGG. The span at 124 to 134 shows a compositional bias: basic and acidic residues; the sequence is PRYDGTWRPEP. Residues 124–156 form a disordered region; sequence PRYDGTWRPEPGKTLPPVPAGRKPVVRFKNPQD. Residues 246 to 250 carry the 'KMSKS' region motif; it reads KLSKR. Position 249 (Lys249) interacts with ATP.

It belongs to the class-I aminoacyl-tRNA synthetase family. Glutamate--tRNA ligase type 1 subfamily. As to quaternary structure, monomer.

The protein resides in the cytoplasm. It catalyses the reaction tRNA(Glu) + L-glutamate + ATP = L-glutamyl-tRNA(Glu) + AMP + diphosphate. In terms of biological role, catalyzes the attachment of glutamate to tRNA(Glu) in a two-step reaction: glutamate is first activated by ATP to form Glu-AMP and then transferred to the acceptor end of tRNA(Glu). This Bordetella petrii (strain ATCC BAA-461 / DSM 12804 / CCUG 43448) protein is Glutamate--tRNA ligase.